Reading from the N-terminus, the 280-residue chain is Octanoyltransferase LIP2p2, chloroplastic (280 aa).

The transit peptide at 1–34 directs the protein to the chloroplast; sequence MVFSVATSSVTNPKLHHHHHLSDFNRNRVSTSLK. The region spanning 81-270 is the BPL/LPL catalytic domain; the sequence is QECSDSLIIL…EFSEVFQLQM (190 aa). Substrate-binding positions include 123-130, 191-193, and 204-206; these read RGGEVTYH, AIG, and GLA. The active-site Acyl-thioester intermediate is cysteine 222.

It belongs to the LipB family. Expressed in roots, leaves, cauline leaves, stems, siliques and flowers.

It localises to the plastid. It is found in the chloroplast. The enzyme catalyses octanoyl-[ACP] + L-lysyl-[protein] = N(6)-octanoyl-L-lysyl-[protein] + holo-[ACP] + H(+). It participates in protein modification; protein lipoylation via endogenous pathway; protein N(6)-(lipoyl)lysine from octanoyl-[acyl-carrier-protein]: step 1/2. Functionally, catalyzes the transfer of endogenously produced octanoic acid from octanoyl-acyl-carrier-protein onto the lipoyl domains of lipoate-dependent enzymes. Lipoyl-ACP can also act as a substrate although octanoyl-ACP is likely to be the physiological substrate. Together with LIP1P is essential for de novo plastidial protein lipoylation during seed development. Acts redundantly with LIP2P. The chain is Octanoyltransferase LIP2p2, chloroplastic from Arabidopsis thaliana (Mouse-ear cress).